A 409-amino-acid polypeptide reads, in one-letter code: Argininosuccinate synthase (409 aa).

ATP-binding positions include 12–20 (AYSGGLDTS) and A39. L-citrulline-binding residues include Y90 and S95. Residue G120 participates in ATP binding. Positions 122, 126, and 127 each coordinate L-aspartate. Position 126 (N126) interacts with L-citrulline. R130, S181, S190, E266, and Y278 together coordinate L-citrulline.

The protein belongs to the argininosuccinate synthase family. Type 1 subfamily. Homotetramer.

It localises to the cytoplasm. It carries out the reaction L-citrulline + L-aspartate + ATP = 2-(N(omega)-L-arginino)succinate + AMP + diphosphate + H(+). Its pathway is amino-acid biosynthesis; L-arginine biosynthesis; L-arginine from L-ornithine and carbamoyl phosphate: step 2/3. This chain is Argininosuccinate synthase, found in Gluconacetobacter diazotrophicus (strain ATCC 49037 / DSM 5601 / CCUG 37298 / CIP 103539 / LMG 7603 / PAl5).